Reading from the N-terminus, the 454-residue chain is uncharacterized protein (454 aa).

The TRAM domain maps to 1–45 (MAAEGKAIAKVNDLVIFVPYVVPGDVVDLQIKRKKNKYAEAEAVK). [4Fe-4S] cluster is bound by residues C58, C64, C67, and C160. 4 residues coordinate S-adenosyl-L-methionine: Q286, Y315, E336, and D385. The active-site Nucleophile is the C412.

Belongs to the class I-like SAM-binding methyltransferase superfamily. RNA M5U methyltransferase family.

This is an uncharacterized protein from Bacteroides thetaiotaomicron (strain ATCC 29148 / DSM 2079 / JCM 5827 / CCUG 10774 / NCTC 10582 / VPI-5482 / E50).